Consider the following 425-residue polypeptide: Histone-binding protein RBBP7 (425 aa).

Position 2 is an N-acetylalanine (alanine 2). A Phosphoserine modification is found at serine 3. Lysine 4 carries the N6-acetyllysine; alternate modification. Lysine 4 participates in a covalent cross-link: Glycyl lysine isopeptide (Lys-Gly) (interchain with G-Cter in SUMO2); alternate. A Glycyl lysine isopeptide (Lys-Gly) (interchain with G-Cter in ubiquitin); alternate cross-link involves residue lysine 4. The residue at position 10 (threonine 10) is a Phosphothreonine. WD repeat units lie at residues 47–122 (QWLP…KINH), 128–173 (RARY…LRLR), 181–217 (GLSW…KIVD), 228–269 (VVED…HLVD), 275–312 (VNCL…LHTF), 318–369 (EIFQ…LFIH), and 376–403 (ISDF…IWQM). Serine 95 is subject to Phosphoserine. Lysine 101 is covalently cross-linked (Glycyl lysine isopeptide (Lys-Gly) (interchain with G-Cter in SUMO2)). Lysine 119 carries the post-translational modification N6-acetyllysine. Lysine 155 participates in a covalent cross-link: Glycyl lysine isopeptide (Lys-Gly) (interchain with G-Cter in SUMO2). N6-acetyllysine; alternate is present on lysine 159. Residue lysine 159 forms a Glycyl lysine isopeptide (Lys-Gly) (interchain with G-Cter in SUMO2); alternate linkage. The residue at position 354 (serine 354) is a Phosphoserine.

Belongs to the WD repeat RBAP46/RBAP48/MSI1 family. As to quaternary structure, binds directly to helix 1 of the histone fold of histone H4, a region that is not accessible when H4 is in chromatin. Subunit of the type B histone acetyltransferase (HAT) complex, composed of RBBP7 and HAT1. Subunit of the core histone deacetylase (HDAC) complex, which is composed of HDAC1, HDAC2, RBBP4 and RBBP7. The core HDAC complex associates with SIN3A, ARID4B/SAP180, SAP18, SAP30, SAP130, SUDS3/SAP45 and possibly ARID4A/RBP1 and ING1 to form the SIN3 HDAC complex. Component of the nucleosome remodeling and deacetylase (NuRD) repressor complex, composed of core proteins MTA1, MTA2, MTA3, RBBP4, RBBP7, HDAC1, HDAC2, MBD2, MBD3, and peripherally associated proteins CDK2AP1, CDK2AP2, GATAD2A, GATAD2B, CHD3, CHD4 and CHD5. The exact stoichiometry of the NuRD complex is unknown, and some subunits such as MBD2 and MBD3, GATAD2A and GATAD2B, and CHD3, CHD4 and CHD5 define mutually exclusive NuRD complexes. The NuRD complex may interact with MBD3L1. The NuRD complex may interact with MBD3L2. Subunit of the PRC2/EED-EZH2 complex, which is composed of at least EED, EZH2, RBBP4, RBBP7 and SUZ12. The PRC2/EED-EZH2 complex may also associate with HDAC1. Component of the NURF-1 ISWI chromatin remodeling complex (also called the nucleosome-remodeling factor (NURF) complex) at least composed of SMARCA1, BPTF, RBBP4 and RBBP7. Within the complex interacts with SMARCA1. Component of the BPFT-SMARCA1 complex at least composed of SMARCA1, BPFT, RBBP4 and RBBP7; the complex is catalytically inactive and does not remodel chromatin. Within the complex interacts with SMARCA1. Interacts with BRCA1. Interacts with CDK2AP1. Interacts with CENPA. Interacts with CHD3. Interacts with CHD4. Interacts with CREBBP, and this interaction may be enhanced by the binding of phosphorylated CREB1 to CREBBP. Interacts with HDAC7. Interacts with MTA1. Interacts with PWWP2B. Interacts with RB1 (via viral protein-binding domain). Interacts with SUV39H1. In terms of tissue distribution, higher levels in brain, thymus, lung, spleen, kidney, testis, and ovary/uterus; lower levels in heart, liver, and muscle.

It localises to the nucleus. Core histone-binding subunit that may target chromatin remodeling factors, histone acetyltransferases and histone deacetylases to their histone substrates in a manner that is regulated by nucleosomal DNA. Component of several complexes which regulate chromatin metabolism. These include the type B histone acetyltransferase (HAT) complex, which is required for chromatin assembly following DNA replication; the core histone deacetylase (HDAC) complex, which promotes histone deacetylation and consequent transcriptional repression; the nucleosome remodeling and histone deacetylase complex (the NuRD complex), which promotes transcriptional repression by histone deacetylation and nucleosome remodeling; and the PRC2/EED-EZH2 complex, which promotes repression of homeotic genes during development; and the NURF (nucleosome remodeling factor) complex. The sequence is that of Histone-binding protein RBBP7 (Rbbp7) from Mus musculus (Mouse).